Reading from the N-terminus, the 352-residue chain is Putative pectinesterase 11 (352 aa).

A helical transmembrane segment spans residues 13–35; sequence ANYHHIIIINIFILSSITSSSMA. An N-linked (GlcNAc...) asparagine glycan is attached at Asn-76. Asp-175 functions as the Proton donor in the catalytic mechanism. Residue Asp-196 is the Nucleophile of the active site. N-linked (GlcNAc...) asparagine glycosylation is present at Asn-218. Substrate is bound by residues Arg-252 and Trp-254. Residues 332–352 form a disordered region; the sequence is LRPAPSHFKNAPKQTQNKEIN. Residues 343 to 352 are compositionally biased toward polar residues; it reads PKQTQNKEIN.

The protein belongs to the pectinesterase family.

The protein resides in the membrane. The catalysed reaction is [(1-&gt;4)-alpha-D-galacturonosyl methyl ester](n) + n H2O = [(1-&gt;4)-alpha-D-galacturonosyl](n) + n methanol + n H(+). Its pathway is glycan metabolism; pectin degradation; 2-dehydro-3-deoxy-D-gluconate from pectin: step 1/5. Its function is as follows. Acts in the modification of cell walls via demethylesterification of cell wall pectin. The protein is Putative pectinesterase 11 (PME11) of Arabidopsis thaliana (Mouse-ear cress).